We begin with the raw amino-acid sequence, 419 residues long: Protein FAM181B (419 aa).

The segment at 107-157 (LMGAAPPGPSSPGAADTPAKRPLAGAQTVPVPVPAHGKAAPRREASQAAAA) is disordered.

Belongs to the FAM181 family.

The chain is Protein FAM181B (FAM181B) from Bos taurus (Bovine).